Here is an 800-residue protein sequence, read N- to C-terminus: Receptor like protein 26 (800 aa).

The first 19 residues, 1–19 (MRLHFCSLLLLYCIVFVSS), serve as a signal peptide directing secretion. The Extracellular segment spans residues 20–733 (FLTTDALACL…EEEDEVIEWK (714 aa)). Residues N49, N61, N83, N96, N101, and N113 are each glycosylated (N-linked (GlcNAc...) asparagine). LRR repeat units lie at residues 89 to 113 (LHQLRYLNLSHNNFTSSSLPSEFSN), 115 to 138 (TRLEVLSLASSSFTGQVPSSISNL), 139 to 161 (ILLTHLNLSHNELTGSFPPVRNL), 162 to 185 (TKLSFLDLSYNQFSGAIPFDLLPT), 187 to 212 (PFLSYLDLKKNHLTGSIDVPNSSSSS), 214 to 235 (LVRLSLGFNQFEGKIIEPISKL), 236 to 259 (INLNHLELASLNISHPIDLRVFAP), 260 to 281 (LKSLLVFDIRQNRLLPASLSSD), 285 to 307 (PLSLISLILIQCDIIEFPNIFKT), 308 to 332 (LQNLEHIDISNNLIKGKVPEWFWKL), 334 to 357 (RLSIANLVNNSLTGFEGSSEVLLN), and 358 to 381 (SSVQLLDFAYNSMTGAFPTPPLGS). N-linked (GlcNAc...) asparagine glycosylation is found at N145 and N160. N-linked (GlcNAc...) asparagine glycosylation occurs at N207. Residue N247 is glycosylated (N-linked (GlcNAc...) asparagine). Residues N342 and N357 are each glycosylated (N-linked (GlcNAc...) asparagine). Residues 382 to 401 (IYLSAWNNSFTGNIPLSICN) form an LRR 13; degenerate repeat. 2 N-linked (GlcNAc...) asparagine glycosylation sites follow: N388 and N401. 10 LRR repeats span residues 402–423 (RSSLIVLDLSYNKFTGPIPQCL), 424–446 (SNLKVVNLRKNSLEGSIPDEFHS), 448–471 (AKTQTLDVGYNRLTGKLPKSLLNC), 472–494 (SSLRFLSVDNNRIEDTFPFWLKA), 495–519 (LPNLHVLTLRSNRFFGHLSPPDRGP), 522–546 (FPELRILELSDNSFTGSLPPNFFVN), 591–615 (LTFYSTIDFSGNKLEGQIPESIGLL), 616–639 (KELIALNLSNNAFTGHIPMSLANV), 640–663 (TELESLDLSRNQLSGNIPRELGSL), and 665–688 (FLAYISVAHNQLKGEIPQGPQFSG). A glycan (N-linked (GlcNAc...) asparagine) is linked at N470. N622 and N638 each carry an N-linked (GlcNAc...) asparagine glycan. The helical transmembrane segment at 734 to 754 (AVFFGYWPGLLLGLVMAHVIA) threads the bilayer. Residues 755–800 (SFKPKWFVKILGPAKGKQVDPVRLFMNLDSRWDSFNNKDTVEEEVI) lie on the Cytoplasmic side of the membrane.

It belongs to the RLP family.

It localises to the cell membrane. In Arabidopsis thaliana (Mouse-ear cress), this protein is Receptor like protein 26.